A 248-amino-acid polypeptide reads, in one-letter code: MWLGVITLFPEMFRAVTDFGVTGRAVKNGLLELHTWNPRDFTHDRHSTVDDRPYGGGPGMLMMVQPLRDAIHAAKAAAGEEAKVIYLSPQGRKLDQQGVTELAESSRLILVCGRYEGIDERIIQTEVDEEWSVGDYVLSGGELPAMTLIDAVSRLVPGVLGKQASAEQDSFSDGLLDCPHYTRPESLDGLDVPAVLLSGNHEQIRLWRLQQSLGRTFLRRPELFENLALTDEQSTLLAQFVEAMDKNA.

S-adenosyl-L-methionine contacts are provided by residues Gly-113 and 133–138 (VGDYVL).

This sequence belongs to the RNA methyltransferase TrmD family. In terms of assembly, homodimer.

Its subcellular location is the cytoplasm. It catalyses the reaction guanosine(37) in tRNA + S-adenosyl-L-methionine = N(1)-methylguanosine(37) in tRNA + S-adenosyl-L-homocysteine + H(+). Specifically methylates guanosine-37 in various tRNAs. The polypeptide is tRNA (guanine-N(1)-)-methyltransferase (Shewanella sp. (strain ANA-3)).